The sequence spans 290 residues: 4-diphosphocytidyl-2-C-methyl-D-erythritol kinase (290 aa).

Lys10 is a catalytic residue. Position 96 to 106 (96 to 106) interacts with ATP; the sequence is PIAAGLGGGSS. The active site involves Asp138.

Belongs to the GHMP kinase family. IspE subfamily.

The enzyme catalyses 4-CDP-2-C-methyl-D-erythritol + ATP = 4-CDP-2-C-methyl-D-erythritol 2-phosphate + ADP + H(+). It functions in the pathway isoprenoid biosynthesis; isopentenyl diphosphate biosynthesis via DXP pathway; isopentenyl diphosphate from 1-deoxy-D-xylulose 5-phosphate: step 3/6. Catalyzes the phosphorylation of the position 2 hydroxy group of 4-diphosphocytidyl-2C-methyl-D-erythritol. This Caulobacter vibrioides (strain NA1000 / CB15N) (Caulobacter crescentus) protein is 4-diphosphocytidyl-2-C-methyl-D-erythritol kinase.